Consider the following 246-residue polypeptide: 1-(5-phosphoribosyl)-5-[(5-phosphoribosylamino)methylideneamino] imidazole-4-carboxamide isomerase (246 aa).

Catalysis depends on D7, which acts as the Proton acceptor. Catalysis depends on D129, which acts as the Proton donor.

It belongs to the HisA/HisF family.

It is found in the cytoplasm. It catalyses the reaction 1-(5-phospho-beta-D-ribosyl)-5-[(5-phospho-beta-D-ribosylamino)methylideneamino]imidazole-4-carboxamide = 5-[(5-phospho-1-deoxy-D-ribulos-1-ylimino)methylamino]-1-(5-phospho-beta-D-ribosyl)imidazole-4-carboxamide. The protein operates within amino-acid biosynthesis; L-histidine biosynthesis; L-histidine from 5-phospho-alpha-D-ribose 1-diphosphate: step 4/9. This Buchnera aphidicola subsp. Acyrthosiphon pisum (strain Tuc7) protein is 1-(5-phosphoribosyl)-5-[(5-phosphoribosylamino)methylideneamino] imidazole-4-carboxamide isomerase.